Consider the following 234-residue polypeptide: Gem-associated protein 8 (234 aa).

Residues 60-116 (LAQSPAAKGGTSPKSRSKSPSASGDACRRRSRPGKPGPQRRSTEKPARFAEDNDSES) form a disordered region. A compositionally biased stretch (low complexity) spans 67-83 (KGGTSPKSRSKSPSASG). The segment covering 100–110 (RSTEKPARFAE) has biased composition (basic and acidic residues). Residues 130 to 153 (ITDELRQYFAETEQHREELRRQHQ) adopt a coiled-coil conformation.

As to quaternary structure, part of the core SMN complex that contains SMN1, GEMIN2/SIP1, DDX20/GEMIN3, GEMIN4, GEMIN5, GEMIN6, GEMIN7, GEMIN8 and STRAP/UNRIP. Part of the SMN-Sm complex that contains SMN1, GEMIN2/SIP1, DDX20/GEMIN3, GEMIN4, GEMIN5, GEMIN6, GEMIN7, GEMIN8, STRAP/UNRIP and the Sm proteins SNRPB, SNRPD1, SNRPD2, SNRPD3, SNRPE, SNRPF and SNRPG. Interacts with GEMIN6; the interaction is direct. Interacts with GEMIN7; the interaction is direct. Interacts with SMN1; the interaction is direct. Interacts with GEMIN4; the interaction is direct.

The protein localises to the nucleus. Its subcellular location is the gem. It is found in the cytoplasm. The SMN complex catalyzes the assembly of small nuclear ribonucleoproteins (snRNPs), the building blocks of the spliceosome, and thereby plays an important role in the splicing of cellular pre-mRNAs. Most spliceosomal snRNPs contain a common set of Sm proteins SNRPB, SNRPD1, SNRPD2, SNRPD3, SNRPE, SNRPF and SNRPG that assemble in a heptameric protein ring on the Sm site of the small nuclear RNA to form the core snRNP (Sm core). In the cytosol, the Sm proteins SNRPD1, SNRPD2, SNRPE, SNRPF and SNRPG are trapped in an inactive 6S pICln-Sm complex by the chaperone CLNS1A that controls the assembly of the core snRNP. To assemble core snRNPs, the SMN complex accepts the trapped 5Sm proteins from CLNS1A forming an intermediate. Binding of snRNA inside 5Sm triggers eviction of the SMN complex, thereby allowing binding of SNRPD3 and SNRPB to complete assembly of the core snRNP. The polypeptide is Gem-associated protein 8 (GEMIN8) (Bos taurus (Bovine)).